Consider the following 455-residue polypeptide: UDP-glycosyltransferase 75B2 (455 aa).

Catalysis depends on histidine 16, which acts as the Proton acceptor. An an anthocyanidin-binding site is contributed by histidine 16. Glutamine 337, histidine 352, tryptophan 355, serine 357, glutamate 360, aspartate 376, and glutamine 377 together coordinate UDP-alpha-D-glucose.

The protein belongs to the UDP-glycosyltransferase family.

It catalyses the reaction (indol-3-yl)acetate + UDP-alpha-D-glucose = 1-O-(indol-3-ylacetyl)-beta-D-glucose + UDP. It participates in plant hormone metabolism; auxin conjugation. Functionally, possesses low catalytic activity in vitro. Also active as glucosyltransferase in vitro on benzoates and benzoate derivatives. This chain is UDP-glycosyltransferase 75B2 (UGT75B2), found in Arabidopsis thaliana (Mouse-ear cress).